A 424-amino-acid polypeptide reads, in one-letter code: MAKIVVTGGQALHGEVHISGAKNAVLPILCATLLADAPVEISNVPHLHDVITTVKLLSELGAEVTIDEGTLAKGRSMLVDPRSVTHQVAPYELVKTMRASILVLGPLLARYGTAEVSLPGGCAIGSRPVDQHIKGLQALGADISVENGYIKATSNGRLKGARYVFDMVSVTGTENVLMAAVLAEGTTVLENAAMEPEVTDLADCLIALGARIEGAGTPRIVVQGVERLGGGHHAVLPDRIETGTFLVAAAMTGGSVTVRRARPETLDAVLDKLTEAGATITTTADSITLDMQGKRPRAVSLTTAPYPAFPTDMQAQFMALNCVADGVGVINETIFENRFMHVNELLRLGADIQVEGHTAIVRGAERLSGAPVMATDLRASASLILAGLVADGDTTIDRIYHLDRGYENIEEKLGALGATIQRTA.

22-23 (KN) is a phosphoenolpyruvate binding site. R98 provides a ligand contact to UDP-N-acetyl-alpha-D-glucosamine. The active-site Proton donor is the C122. At C122 the chain carries 2-(S-cysteinyl)pyruvic acid O-phosphothioketal. UDP-N-acetyl-alpha-D-glucosamine contacts are provided by residues 127–131 (RPVDQ), D312, and I334.

This sequence belongs to the EPSP synthase family. MurA subfamily.

It is found in the cytoplasm. It carries out the reaction phosphoenolpyruvate + UDP-N-acetyl-alpha-D-glucosamine = UDP-N-acetyl-3-O-(1-carboxyvinyl)-alpha-D-glucosamine + phosphate. Its pathway is cell wall biogenesis; peptidoglycan biosynthesis. In terms of biological role, cell wall formation. Adds enolpyruvyl to UDP-N-acetylglucosamine. The protein is UDP-N-acetylglucosamine 1-carboxyvinyltransferase of Xanthomonas axonopodis pv. citri (strain 306).